Reading from the N-terminus, the 83-residue chain is Normal mucosa of esophagus-specific gene 1 protein (83 aa).

The protein belongs to the complex I NDUFA4 subunit family. Strongly expressed in vertebrae, brain, intestine and stomach.

The protein localises to the nucleus. This chain is Normal mucosa of esophagus-specific gene 1 protein (Nmes1), found in Mus musculus (Mouse).